The primary structure comprises 83 residues: Mitochondrial import inner membrane translocase subunit Tim8 B (83 aa).

Ala2 bears the N-acetylalanine mark. The Twin CX3C motif signature appears at 36–59 (CWDKCVEKPGNRLDSRTENCLSSC). 2 cysteine pairs are disulfide-bonded: Cys36–Cys59 and Cys40–Cys55.

The protein belongs to the small Tim family. As to quaternary structure, heterohexamer; possibly composed of 3 copies of TIMM8B and 3 copies of TIMM13, named soluble 70 kDa complex. Associates with the TIM22 complex, whose core is composed of TIMM22.

It localises to the mitochondrion inner membrane. In terms of biological role, probable mitochondrial intermembrane chaperone that participates in the import and insertion of some multi-pass transmembrane proteins into the mitochondrial inner membrane. Also required for the transfer of beta-barrel precursors from the TOM complex to the sorting and assembly machinery (SAM complex) of the outer membrane. Acts as a chaperone-like protein that protects the hydrophobic precursors from aggregation and guide them through the mitochondrial intermembrane space. This is Mitochondrial import inner membrane translocase subunit Tim8 B (TIMM8B) from Bos taurus (Bovine).